The primary structure comprises 619 residues: Cationic amino acid transporter 3 (619 aa).

Topologically, residues methionine 1–aspartate 36 are cytoplasmic. The helical transmembrane segment at leucine 37–valine 57 threads the bilayer. Topologically, residues alanine 58–lysine 61 are extracellular. A helical membrane pass occupies residues alanine 62 to leucine 82. Residues cysteine 83 to glutamate 107 are Cytoplasmic-facing. A helical transmembrane segment spans residues leucine 108–valine 128. The Extracellular segment spans residues alanine 129–glutamate 162. Residues tyrosine 163–alanine 183 form a helical membrane-spanning segment. At serine 184–lysine 191 the chain is on the cytoplasmic side. The chain crosses the membrane as a helical span at residues valine 192 to glycine 212. Residues aspartate 213–aspartate 233 are Extracellular-facing. N-linked (GlcNAc...) asparagine glycosylation is present at asparagine 232. A helical membrane pass occupies residues threonine 234 to leucine 254. Over arginine 255–proline 285 the chain is Cytoplasmic. Residues methionine 286–leucine 306 form a helical membrane-spanning segment. Topologically, residues threonine 307–tyrosine 335 are extracellular. A helical membrane pass occupies residues valine 336–methionine 356. Residues proline 357 to threonine 382 are Cytoplasmic-facing. A helical transmembrane segment spans residues proline 383–leucine 403. Topologically, residues threonine 404 to leucine 406 are extracellular. A helical transmembrane segment spans residues valine 407–isoleucine 427. The Cytoplasmic segment spans residues leucine 428–glutamine 475. A helical membrane pass occupies residues isoleucine 476–alanine 496. The Extracellular segment spans residues glutamine 497–aspartate 506. The chain crosses the membrane as a helical span at residues leucine 507 to isoleucine 527. Residues tryptophan 528–lysine 540 lie on the Cytoplasmic side of the membrane. A helical transmembrane segment spans residues valine 541–glutamine 561. Residues methionine 562–arginine 569 are Extracellular-facing. The helical transmembrane segment at phenylalanine 570–leucine 590 threads the bilayer. The Cytoplasmic segment spans residues glutamate 591–valine 619. Threonine 606 carries the post-translational modification Phosphothreonine. Serine 618 is subject to Phosphoserine.

This sequence belongs to the amino acid-polyamine-organocation (APC) superfamily. Cationic amino acid transporter (CAT) (TC 2.A.3.3) family. N-glycosylated. Highly expressed in thymus, uterus and testis. Detected at lower levels in brain, mammary gland, prostate, salivary gland and fetal spleen. In brain, highest expression in thalamus, hippocampus and amygdala.

It localises to the cell membrane. It carries out the reaction L-arginine(in) = L-arginine(out). The enzyme catalyses L-lysine(in) = L-lysine(out). The catalysed reaction is L-ornithine(in) = L-ornithine(out). Functionally, uniporter that mediates the uptake of cationic L-amino acids such as L-arginine, L-lysine and L-ornithine. The transport is sodium ions- and pH-independent, moderately trans-stimulated and is mediated by passive diffusion. The polypeptide is Cationic amino acid transporter 3 (Homo sapiens (Human)).